Here is a 278-residue protein sequence, read N- to C-terminus: Diaminopimelate epimerase (278 aa).

Substrate is bound by residues N13, Q46, and N66. C75 functions as the Proton donor in the catalytic mechanism. Substrate contacts are provided by residues 76 to 77 (GN), N159, N192, and 210 to 211 (ER). Residue C219 is the Proton acceptor of the active site. 220-221 (GT) provides a ligand contact to substrate.

This sequence belongs to the diaminopimelate epimerase family. As to quaternary structure, homodimer.

Its subcellular location is the cytoplasm. It catalyses the reaction (2S,6S)-2,6-diaminopimelate = meso-2,6-diaminopimelate. It functions in the pathway amino-acid biosynthesis; L-lysine biosynthesis via DAP pathway; DL-2,6-diaminopimelate from LL-2,6-diaminopimelate: step 1/1. In terms of biological role, catalyzes the stereoinversion of LL-2,6-diaminopimelate (L,L-DAP) to meso-diaminopimelate (meso-DAP), a precursor of L-lysine and an essential component of the bacterial peptidoglycan. This chain is Diaminopimelate epimerase, found in Laribacter hongkongensis (strain HLHK9).